Consider the following 569-residue polypeptide: Toxin YxiD (569 aa).

An LXG domain is found at 1–235 (MKTLDVHALH…NPQMKQADDS (235 aa)). Residues 8–91 (ALHEGIQHTI…QHAISSVESN (84 aa)) are a coiled coil. Residues 548–569 (HQAGIHGTGSPANELFKGGKKK) are disordered.

This sequence in the N-terminal section; belongs to the LXG family. In terms of assembly, probably interacts with cognate immunity protein YxxD but not with non-cognate immunity proteins. The interaction inhibits the toxic activity of YxxD.

The protein resides in the secreted. Functionally, toxic component of one of 6 LXG toxin-immunity modules in this strain. They promote kin selection, mediate competition in biofilms, and drive spatial segregation of different strains, indicating that LXG toxins may help avoid warfare between strains in biofilms. Mediates intercellular competition during biofilm formation; disruption of the operon disadvantages the bacteria, but overexpression of the cognate immunity protein restores growth in competition with wild-type. Overexpression alone in situ causes growth arrest but not cell lysis, a large decrease in chromosomal DNA content and the production of anucleate cells. No effect is seen on rRNA. Co-overexpression with cognate immunity protein YxxD does not cause growth arrest. The toxic effect is not dependent on the epsA and tapA operons which are required for biofilm formation. This Bacillus subtilis (strain 168) protein is Toxin YxiD (yxiD).